A 103-amino-acid polypeptide reads, in one-letter code: Large ribosomal subunit protein bL21 (103 aa).

The protein belongs to the bacterial ribosomal protein bL21 family. In terms of assembly, part of the 50S ribosomal subunit. Contacts protein L20.

In terms of biological role, this protein binds to 23S rRNA in the presence of protein L20. The chain is Large ribosomal subunit protein bL21 from Burkholderia ambifaria (strain MC40-6).